The sequence spans 198 residues: Recombination protein RecR (198 aa).

Residues 57-72 (CSTCQTLTDQDPCAIC) form a C4-type zinc finger. In terms of domain architecture, Toprim spans 80–175 (RMICVVEGVP…KVTRIAQGVP (96 aa)).

The protein belongs to the RecR family.

Its function is as follows. May play a role in DNA repair. It seems to be involved in an RecBC-independent recombinational process of DNA repair. It may act with RecF and RecO. This is Recombination protein RecR from Anaeromyxobacter dehalogenans (strain 2CP-C).